Here is a 519-residue protein sequence, read N- to C-terminus: MATTTLNDSVTTTLASEPQRTYQVVVAATKEMGIGKDGKLPWNLPTDLKFFKDITLTTSDSSKKNAVVMGRKTWESIPIKYRPLSGRLNVVLTRSGGFDIANTENVVTCSSVDSALDLLAAPPYCLSIERVFVIGGGDILREALNRPSCDAIHLTEIDTSVDCDTFIPAIDTSVYQPWSSSFPVTENGLRFCFTTFVRVKSSADESSDESNGSQSLQFDGKKFLFLPKMVFDQHEEFLYLNMVEDIISNGNVKNDRTGTGTLSKFGCQMKFNLRRSFPLLTTKRVFWRGVVEELLWFISGSTNAKVLQEKGIHIWDGNASREYLDGIGLTEREEGDLGPVYGFQWRHFGAKYTDMHADYTGQGFDQLVDVIDKIKNNPDDRRIIMSAWNPSDLKLMALPPCHMFAQFYVAEGELSCQMYQRSADMGLGVPFNIASYSLLTCMLAHVCDLVPGDFIHVLGDAHVYKTHVRPLQEQLLNLPKPFPVMKINPEKKQIDSFVASDFDLTGYDPHKKIEMKMAV.

Ala2 carries the N-acetylalanine modification. The region spanning Thr21–Arg198 is the DHFR domain. Val25 serves as a coordination point for substrate. NADP(+) contacts are provided by residues Ala27 and Gly33–Lys39. Position 47 (Asp47) interacts with substrate. Residues Arg71–Thr73 and Leu92–Ser95 contribute to the NADP(+) site. Ile134 contributes to the substrate binding site. Gly135 to Glu142 contributes to the NADP(+) binding site. Substrate is bound at residue Thr155. Positions Ser201 to His234 are hinge. Residues Glu235–Val519 form a thymidylate synthase region. Arg256 provides a ligand contact to dUMP. The active site involves Cys401. Residues His402, Gln420–Asp424, Asn432, and His462–Tyr464 contribute to the dUMP site.

It in the N-terminal section; belongs to the dihydrofolate reductase family. This sequence in the C-terminal section; belongs to the thymidylate synthase family. In terms of assembly, heterodimer or homodimer.

The enzyme catalyses (6S)-5,6,7,8-tetrahydrofolate + NADP(+) = 7,8-dihydrofolate + NADPH + H(+). It catalyses the reaction dUMP + (6R)-5,10-methylene-5,6,7,8-tetrahydrofolate = 7,8-dihydrofolate + dTMP. The protein operates within cofactor biosynthesis; tetrahydrofolate biosynthesis; 5,6,7,8-tetrahydrofolate from 7,8-dihydrofolate: step 1/1. Bifunctional enzyme. Involved in de novo dTMP biosynthesis. Key enzyme in folate metabolism. Can play two different roles depending on the source of dihydrofolate: de novo synthesis of tetrahydrofolate or recycling of the dihydrofolate released as one of the end products of the TS catalyzed reaction. Catalyzes an essential reaction for de novo glycine and purine synthesis, DNA precursor synthesis, and for the conversion of dUMP to dTMP. The protein is Bifunctional dihydrofolate reductase-thymidylate synthase 1 (THY-1) of Arabidopsis thaliana (Mouse-ear cress).